The primary structure comprises 598 residues: Aspartate--tRNA(Asp/Asn) ligase (598 aa).

Glu-170 provides a ligand contact to L-aspartate. An aspartate region spans residues 194 to 197; sequence QLFK. Arg-216 provides a ligand contact to L-aspartate. Residues 216 to 218 and Gln-225 contribute to the ATP site; that span reads RDE. His-448 provides a ligand contact to L-aspartate. An ATP-binding site is contributed by Glu-482. Arg-489 contacts L-aspartate. 534–537 contacts ATP; sequence GWDR. Residues 558–598 form a disordered region; the sequence is GGGVDPLTDAPAPITPQQRKESGIDAKPREDKPKEDAKSKA. Residues 575–598 show a composition bias toward basic and acidic residues; sequence QRKESGIDAKPREDKPKEDAKSKA.

Belongs to the class-II aminoacyl-tRNA synthetase family. Type 1 subfamily. Homodimer.

It localises to the cytoplasm. The enzyme catalyses tRNA(Asx) + L-aspartate + ATP = L-aspartyl-tRNA(Asx) + AMP + diphosphate. Aspartyl-tRNA synthetase with relaxed tRNA specificity since it is able to aspartylate not only its cognate tRNA(Asp) but also tRNA(Asn). Reaction proceeds in two steps: L-aspartate is first activated by ATP to form Asp-AMP and then transferred to the acceptor end of tRNA(Asp/Asn). The chain is Aspartate--tRNA(Asp/Asn) ligase from Mycolicibacterium smegmatis (strain ATCC 700084 / mc(2)155) (Mycobacterium smegmatis).